We begin with the raw amino-acid sequence, 272 residues long: Type III pantothenate kinase (272 aa).

An ATP-binding site is contributed by 6 to 13 (NVNNTNTL). Residue 113–116 (GADR) participates in substrate binding. Residue Asp115 is the Proton acceptor of the active site. K(+) is bound at residue Asp135. Thr138 contributes to the ATP binding site. Residue Thr190 participates in substrate binding.

Belongs to the type III pantothenate kinase family. In terms of assembly, homodimer. NH4(+) is required as a cofactor. Requires K(+) as cofactor.

It is found in the cytoplasm. It carries out the reaction (R)-pantothenate + ATP = (R)-4'-phosphopantothenate + ADP + H(+). It functions in the pathway cofactor biosynthesis; coenzyme A biosynthesis; CoA from (R)-pantothenate: step 1/5. Its function is as follows. Catalyzes the phosphorylation of pantothenate (Pan), the first step in CoA biosynthesis. This chain is Type III pantothenate kinase, found in Acidobacterium capsulatum (strain ATCC 51196 / DSM 11244 / BCRC 80197 / JCM 7670 / NBRC 15755 / NCIMB 13165 / 161).